The chain runs to 157 residues: Xanthine-guanine phosphoribosyltransferase (157 aa).

5-phospho-alpha-D-ribose 1-diphosphate is bound by residues R42–G43 and D93–T101. D94 is a binding site for Mg(2+). D97 and I140 together coordinate guanine. Residues D97 and I140 each coordinate xanthine. Residues D97 to T101 and W139 to I140 each bind GMP.

It belongs to the purine/pyrimidine phosphoribosyltransferase family. XGPT subfamily. As to quaternary structure, homotetramer. Mg(2+) is required as a cofactor.

It localises to the cell inner membrane. The catalysed reaction is GMP + diphosphate = guanine + 5-phospho-alpha-D-ribose 1-diphosphate. It catalyses the reaction XMP + diphosphate = xanthine + 5-phospho-alpha-D-ribose 1-diphosphate. It carries out the reaction IMP + diphosphate = hypoxanthine + 5-phospho-alpha-D-ribose 1-diphosphate. It participates in purine metabolism; GMP biosynthesis via salvage pathway; GMP from guanine: step 1/1. The protein operates within purine metabolism; XMP biosynthesis via salvage pathway; XMP from xanthine: step 1/1. In terms of biological role, purine salvage pathway enzyme that catalyzes the transfer of the ribosyl-5-phosphate group from 5-phospho-alpha-D-ribose 1-diphosphate (PRPP) to the N9 position of the 6-oxopurines guanine and xanthine to form the corresponding ribonucleotides GMP (guanosine 5'-monophosphate) and XMP (xanthosine 5'-monophosphate), with the release of PPi. To a lesser extent, also acts on hypoxanthine. The sequence is that of Xanthine-guanine phosphoribosyltransferase from Actinobacillus pleuropneumoniae serotype 5b (strain L20).